A 484-amino-acid chain; its full sequence is MSHQRILLLLMAAFFAWVSAQTPPGQADKSKLIAHDVLMKTTSLSETTIATSSKRFLRLYDAEVRDTVRGDNDVDREERGTTPLLSKVDDLIHKVFKSNPEQAQIKAWMKSRVHPQAIFDTLRLAKSTTKLNDDPNLLLWLKLVAAFRAKNGNQAFSDLDLYYLLLKRSSGEELKILIESFRKTGALKELGKSMQKSLSGSWVSKTLQHETDPKIVYDTLRLQEAGTKLVDSPIFHQWLAYAQQYRAQKGNHWFGDDDMLDLFRKTMPEKDVVTLLHLLRNVPGMKDHGDTMQRFLFLSSKTSRKMMHDVWLNYDVTPEQVFKILRLVKVNMDAVDTNAMFIHWLRYVNLYRSHTKKNVLSSVQMVHFLADTKPLRSEWQFATFFESLKDVPDLKRLAENMQTYLFQNWLHTEWDPKAVSSMLAIPFPTSAVYLPKNDPIYKTWVAYTLYYTERKGGVSLLNKVKTLLDNDNPIGALTAAMKAQ.

Positions 1-20 are cleaved as a signal peptide; that stretch reads MSHQRILLLLMAAFFAWVSA. Positions 55-79 match the RxLR-dEER motif; sequence RFLRLYDAEVRDTVRGDNDVDREER.

Belongs to the RxLR effector family.

The protein localises to the secreted. It localises to the host cell membrane. Functionally, effector that enhances P.infestans colonization of Nicotiana benthamiana leaves. The protein is RxLR effector protein PexRD18 of Phytophthora infestans (strain T30-4) (Potato late blight agent).